A 136-amino-acid chain; its full sequence is Peptide methionine sulfoxide reductase B5 (136 aa).

The 122-residue stretch at 14–135 (DEEWRAVLSP…NSVSIKFTPA (122 aa)) folds into the MsrB domain. 4 residues coordinate Zn(2+): Cys53, Cys56, Cys99, and Cys102. Cysteines 71 and 124 form a disulfide. Cys124 serves as the catalytic Nucleophile.

The protein belongs to the MsrB Met sulfoxide reductase family. Requires Zn(2+) as cofactor.

The protein resides in the cytoplasm. It is found in the cytosol. The enzyme catalyses L-methionyl-[protein] + [thioredoxin]-disulfide + H2O = L-methionyl-(R)-S-oxide-[protein] + [thioredoxin]-dithiol. Catalyzes the reduction of methionine sulfoxide (MetSO) to methionine in proteins. Plays a protective role against oxidative stress by restoring activity to proteins that have been inactivated by methionine oxidation. MSRB family specifically reduces the MetSO R-enantiomer. The chain is Peptide methionine sulfoxide reductase B5 (MSRB5) from Oryza sativa subsp. japonica (Rice).